Here is a 444-residue protein sequence, read N- to C-terminus: Zinc finger CCCH domain-containing protein 63 (444 aa).

C3H1-type zinc fingers lie at residues 56–84, 101–129, and 147–175; these read RIGE…HPAD, RIGQ…HPRE, and RPNE…HPQP. The segment at 251–276 is disordered; the sequence is GSSSSDDQQRTAGGAQYYTGSRHSET. C3H1-type zinc fingers lie at residues 309 to 337 and 355 to 383; these read RPDQ…HPKE and RPGE…HPMG. Positions 405-444 are disordered; sequence PVPAHSEVSPDNVSGRSRRITHSDSQQIPSGERGTEREAS.

This is Zinc finger CCCH domain-containing protein 63 from Oryza sativa subsp. japonica (Rice).